The chain runs to 262 residues: Phosphatidylglycerol--prolipoprotein diacylglyceryl transferase (262 aa).

The next 4 helical transmembrane spans lie at 17–37 (FAIH…LLLG), 59–79 (LLFA…TLFY), 94–114 (IWEG…ALYW), and 121–141 (TTFF…LAFG). R142 is a binding site for a 1,2-diacyl-sn-glycero-3-phospho-(1'-sn-glycerol). The next 3 helical transmembrane spans lie at 176 to 196 (QIYQ…FYAG), 201 to 221 (VGQV…LAEY), and 231 to 251 (LLGL…FFGI).

It belongs to the Lgt family.

It is found in the cell inner membrane. The catalysed reaction is L-cysteinyl-[prolipoprotein] + a 1,2-diacyl-sn-glycero-3-phospho-(1'-sn-glycerol) = an S-1,2-diacyl-sn-glyceryl-L-cysteinyl-[prolipoprotein] + sn-glycerol 1-phosphate + H(+). Its pathway is protein modification; lipoprotein biosynthesis (diacylglyceryl transfer). Catalyzes the transfer of the diacylglyceryl group from phosphatidylglycerol to the sulfhydryl group of the N-terminal cysteine of a prolipoprotein, the first step in the formation of mature lipoproteins. The sequence is that of Phosphatidylglycerol--prolipoprotein diacylglyceryl transferase from Polynucleobacter necessarius subsp. necessarius (strain STIR1).